A 76-amino-acid chain; its full sequence is Omega-conotoxin-like TxO5 (76 aa).

Residues 1–22 (MKLTCMMIVAVLFLTAWTFVTA) form the signal peptide. Residues 23–48 (ITSNGLENLFPKAHHEMKNPEASKLN) constitute a propeptide that is removed on maturation. Intrachain disulfides connect Cys51–Cys66, Cys58–Cys70, and Cys65–Cys75.

It belongs to the conotoxin O1 superfamily. In terms of tissue distribution, expressed by the venom duct.

The protein resides in the secreted. Omega-conotoxins act at presynaptic membranes, they bind and block voltage-gated calcium channels (Cav). In Conus textile (Cloth-of-gold cone), this protein is Omega-conotoxin-like TxO5.